A 302-amino-acid polypeptide reads, in one-letter code: 4-hydroxy-tetrahydrodipicolinate synthase (302 aa).

Position 55 (T55) interacts with pyruvate. Catalysis depends on Y144, which acts as the Proton donor/acceptor. The active-site Schiff-base intermediate with substrate is K172. V214 provides a ligand contact to pyruvate.

Belongs to the DapA family. In terms of assembly, homotetramer; dimer of dimers.

It is found in the cytoplasm. The enzyme catalyses L-aspartate 4-semialdehyde + pyruvate = (2S,4S)-4-hydroxy-2,3,4,5-tetrahydrodipicolinate + H2O + H(+). It participates in amino-acid biosynthesis; L-lysine biosynthesis via DAP pathway; (S)-tetrahydrodipicolinate from L-aspartate: step 3/4. Functionally, catalyzes the condensation of (S)-aspartate-beta-semialdehyde [(S)-ASA] and pyruvate to 4-hydroxy-tetrahydrodipicolinate (HTPA). The polypeptide is 4-hydroxy-tetrahydrodipicolinate synthase (Prochlorococcus marinus (strain MIT 9313)).